The sequence spans 726 residues: Dipeptidyl-peptidase 5 (726 aa).

Positions 1–19 (MAPAKWLIASLAFASTGLA) are cleaved as a signal peptide. N-linked (GlcNAc...) asparagine glycosylation is found at N96 and N252. Positions 268–292 (VAEPINKRNGPRTPHGIEGASSSPV) are disordered. An N-linked (GlcNAc...) asparagine glycan is attached at N485. S558 (charge relay system) is an active-site residue. N-linked (GlcNAc...) asparagine glycosylation is present at N605. Active-site charge relay system residues include D641 and H673. Residue N699 is glycosylated (N-linked (GlcNAc...) asparagine).

The protein belongs to the peptidase S9C family.

It is found in the secreted. Extracellular dipeptidyl-peptidase which removes N-terminal dipeptides sequentially from polypeptides having unsubstituted N-termini. Contributes to pathogenicity. This Arthroderma otae (Microsporum canis) protein is Dipeptidyl-peptidase 5 (DPP5).